A 166-amino-acid polypeptide reads, in one-letter code: Protein SprT (166 aa).

One can recognise a SprT-like domain in the interval 19-164; the sequence is REHLAKANLK…CVHCGDLLVA (146 aa). His-78 lines the Zn(2+) pocket. Glu-79 is an active-site residue. His-82 lines the Zn(2+) pocket.

It belongs to the SprT family. The cofactor is Zn(2+).

It is found in the cytoplasm. In Klebsiella pneumoniae (strain 342), this protein is Protein SprT.